The sequence spans 160 residues: SsrA-binding protein (160 aa).

Belongs to the SmpB family.

Its subcellular location is the cytoplasm. In terms of biological role, required for rescue of stalled ribosomes mediated by trans-translation. Binds to transfer-messenger RNA (tmRNA), required for stable association of tmRNA with ribosomes. tmRNA and SmpB together mimic tRNA shape, replacing the anticodon stem-loop with SmpB. tmRNA is encoded by the ssrA gene; the 2 termini fold to resemble tRNA(Ala) and it encodes a 'tag peptide', a short internal open reading frame. During trans-translation Ala-aminoacylated tmRNA acts like a tRNA, entering the A-site of stalled ribosomes, displacing the stalled mRNA. The ribosome then switches to translate the ORF on the tmRNA; the nascent peptide is terminated with the 'tag peptide' encoded by the tmRNA and targeted for degradation. The ribosome is freed to recommence translation, which seems to be the essential function of trans-translation. The polypeptide is SsrA-binding protein (Pasteurella multocida (strain Pm70)).